The primary structure comprises 157 residues: Endoribonuclease YbeY (157 aa).

Residues His-121, His-125, and Asp-131 each coordinate Zn(2+).

It belongs to the endoribonuclease YbeY family. It depends on Zn(2+) as a cofactor.

It is found in the cytoplasm. In terms of biological role, single strand-specific metallo-endoribonuclease involved in late-stage 70S ribosome quality control and in maturation of the 3' terminus of the 16S rRNA. This is Endoribonuclease YbeY from Salinibacter ruber (strain DSM 13855 / M31).